Reading from the N-terminus, the 393-residue chain is Methylthioribose-1-phosphate isomerase (393 aa).

Catalysis depends on Asp265, which acts as the Proton donor.

This sequence belongs to the eIF-2B alpha/beta/delta subunits family. MtnA subfamily.

The protein resides in the cytoplasm. The protein localises to the nucleus. The enzyme catalyses 5-(methylsulfanyl)-alpha-D-ribose 1-phosphate = 5-(methylsulfanyl)-D-ribulose 1-phosphate. The protein operates within amino-acid biosynthesis; L-methionine biosynthesis via salvage pathway; L-methionine from S-methyl-5-thio-alpha-D-ribose 1-phosphate: step 1/6. Its function is as follows. Catalyzes the interconversion of methylthioribose-1-phosphate (MTR-1-P) into methylthioribulose-1-phosphate (MTRu-1-P). The polypeptide is Methylthioribose-1-phosphate isomerase (Cryptococcus neoformans var. neoformans serotype D (strain JEC21 / ATCC MYA-565) (Filobasidiella neoformans)).